The primary structure comprises 337 residues: Holliday junction branch migration complex subunit RuvB (337 aa).

Residues 4–186 (ADRLIAADNP…FGIVQRLEYY (183 aa)) are large ATPase domain (RuvB-L). ATP is bound by residues I25, R26, G67, K70, T71, T72, 133–135 (EDY), R176, Y186, and R223. T71 is a Mg(2+) binding site. Residues 187 to 257 (KVDDLQYIVQ…IADKALNMLD (71 aa)) form a small ATPAse domain (RuvB-S) region. The segment at 260–337 (VCGFDYMDRK…LHFGIDRPDK (78 aa)) is head domain (RuvB-H). Residues R315 and R320 each contribute to the DNA site.

Belongs to the RuvB family. Homohexamer. Forms an RuvA(8)-RuvB(12)-Holliday junction (HJ) complex. HJ DNA is sandwiched between 2 RuvA tetramers; dsDNA enters through RuvA and exits via RuvB. An RuvB hexamer assembles on each DNA strand where it exits the tetramer. Each RuvB hexamer is contacted by two RuvA subunits (via domain III) on 2 adjacent RuvB subunits; this complex drives branch migration. In the full resolvosome a probable DNA-RuvA(4)-RuvB(12)-RuvC(2) complex forms which resolves the HJ.

It localises to the cytoplasm. The enzyme catalyses ATP + H2O = ADP + phosphate + H(+). Its function is as follows. The RuvA-RuvB-RuvC complex processes Holliday junction (HJ) DNA during genetic recombination and DNA repair, while the RuvA-RuvB complex plays an important role in the rescue of blocked DNA replication forks via replication fork reversal (RFR). RuvA specifically binds to HJ cruciform DNA, conferring on it an open structure. The RuvB hexamer acts as an ATP-dependent pump, pulling dsDNA into and through the RuvAB complex. RuvB forms 2 homohexamers on either side of HJ DNA bound by 1 or 2 RuvA tetramers; 4 subunits per hexamer contact DNA at a time. Coordinated motions by a converter formed by DNA-disengaged RuvB subunits stimulates ATP hydrolysis and nucleotide exchange. Immobilization of the converter enables RuvB to convert the ATP-contained energy into a lever motion, pulling 2 nucleotides of DNA out of the RuvA tetramer per ATP hydrolyzed, thus driving DNA branch migration. The RuvB motors rotate together with the DNA substrate, which together with the progressing nucleotide cycle form the mechanistic basis for DNA recombination by continuous HJ branch migration. Branch migration allows RuvC to scan DNA until it finds its consensus sequence, where it cleaves and resolves cruciform DNA. In Aliivibrio salmonicida (strain LFI1238) (Vibrio salmonicida (strain LFI1238)), this protein is Holliday junction branch migration complex subunit RuvB.